The sequence spans 72 residues: Prokaryotic ubiquitin-like protein Pup (72 aa).

A compositionally biased stretch (gly residues) spans 1–10; that stretch reads MATKDTGGGQ. Residues 1 to 45 are disordered; it reads MATKDTGGGQQKATRNTEEVEEQAQDAQASEDLKERQEKLSDDVD. Residues 9–60 adopt a coiled-coil conformation; sequence GQQKATRNTEEVEEQAQDAQASEDLKERQEKLSDDVDSVLDEIDDVLEENAE. Residues 28–66 are ARC ATPase binding; the sequence is QASEDLKERQEKLSDDVDSVLDEIDDVLEENAEDFVRSF. Residues 31–42 show a composition bias toward basic and acidic residues; it reads EDLKERQEKLSD. E72 participates in a covalent cross-link: Isoglutamyl lysine isopeptide (Glu-Lys) (interchain with K-? in acceptor proteins).

Belongs to the prokaryotic ubiquitin-like protein family. As to quaternary structure, strongly interacts with the proteasome-associated ATPase ARC through a hydrophobic interface; the interacting region of Pup lies in its C-terminal half. There is one Pup binding site per ARC hexamer ring.

The protein operates within protein degradation; proteasomal Pup-dependent pathway. Protein modifier that is covalently attached to lysine residues of substrate proteins, thereby targeting them for proteasomal degradation. The tagging system is termed pupylation. The sequence is that of Prokaryotic ubiquitin-like protein Pup from Streptomyces avermitilis (strain ATCC 31267 / DSM 46492 / JCM 5070 / NBRC 14893 / NCIMB 12804 / NRRL 8165 / MA-4680).